We begin with the raw amino-acid sequence, 155 residues long: Endoribonuclease YbeY (155 aa).

3 residues coordinate Zn(2+): His110, His114, and His120.

This sequence belongs to the endoribonuclease YbeY family. It depends on Zn(2+) as a cofactor.

Its subcellular location is the cytoplasm. In terms of biological role, single strand-specific metallo-endoribonuclease involved in late-stage 70S ribosome quality control and in maturation of the 3' terminus of the 16S rRNA. The chain is Endoribonuclease YbeY from Deinococcus geothermalis (strain DSM 11300 / CIP 105573 / AG-3a).